A 327-amino-acid chain; its full sequence is Altered inheritance rate of mitochondria protein 25 (327 aa).

The protein belongs to the phospholipid scramblase family.

The protein resides in the mitochondrion. The sequence is that of Altered inheritance rate of mitochondria protein 25 (AIM25) from Saccharomyces cerevisiae (strain ATCC 204508 / S288c) (Baker's yeast).